The following is a 218-amino-acid chain: Elongation factor Ts (218 aa).

Residues 82–85 (TDFV) are involved in Mg(2+) ion dislocation from EF-Tu.

The protein belongs to the EF-Ts family.

It localises to the cytoplasm. Functionally, associates with the EF-Tu.GDP complex and induces the exchange of GDP to GTP. It remains bound to the aminoacyl-tRNA.EF-Tu.GTP complex up to the GTP hydrolysis stage on the ribosome. The protein is Elongation factor Ts of Prochlorococcus marinus (strain NATL2A).